A 394-amino-acid polypeptide reads, in one-letter code: Protein BUR2 (394 aa).

Disordered regions lie at residues 1 to 32 (MVLS…GNPQ) and 372 to 394 (MSER…KPRF). The span at 9-32 (IANSQPSGNGKTSLDIKQNEGNPQ) shows a compositional bias: polar residues. Residues 372 to 381 (MSERSIKRPS) are compositionally biased toward basic and acidic residues.

As to quaternary structure, belongs to the BUR kinase complex.

Its subcellular location is the nucleus. Functionally, component of the BUR kinase complex involved in transcription regulation. This complex phosphorylates the UBC2/RAD6 ubiquitin-conjugating enzyme (E2), leading to monoubiquitination of histone H2B and the silencing of telomeric-associated genes. Also required for histone H3 methylation. Necessary for the recovery from pheromone-induced growth arrest in the cell cycle G1 phase. The kinase activity of the complex requires the presence of BUR2. Overexpression of BUR2 interferes with mitotic chromosome segregation. This chain is Protein BUR2 (BUR2), found in Kluyveromyces lactis (strain ATCC 8585 / CBS 2359 / DSM 70799 / NBRC 1267 / NRRL Y-1140 / WM37) (Yeast).